The sequence spans 274 residues: 2,3,4,5-tetrahydropyridine-2,6-dicarboxylate N-succinyltransferase (274 aa).

The protein belongs to the transferase hexapeptide repeat family.

Its subcellular location is the cytoplasm. It catalyses the reaction (S)-2,3,4,5-tetrahydrodipicolinate + succinyl-CoA + H2O = (S)-2-succinylamino-6-oxoheptanedioate + CoA. It functions in the pathway amino-acid biosynthesis; L-lysine biosynthesis via DAP pathway; LL-2,6-diaminopimelate from (S)-tetrahydrodipicolinate (succinylase route): step 1/3. The sequence is that of 2,3,4,5-tetrahydropyridine-2,6-dicarboxylate N-succinyltransferase from Escherichia fergusonii (strain ATCC 35469 / DSM 13698 / CCUG 18766 / IAM 14443 / JCM 21226 / LMG 7866 / NBRC 102419 / NCTC 12128 / CDC 0568-73).